Reading from the N-terminus, the 233-residue chain is Transmembrane protein 40 (233 aa).

Residue Met-1 is modified to N-acetylmethionine. Residues Met-1 to Ser-14 are compositionally biased toward polar residues. A disordered region spans residues Met-1 to Glu-143. Positions Ser-50–Ser-70 are enriched in low complexity. Residues Tyr-93–His-104 show a composition bias toward gly residues. The segment covering Gly-105–Leu-114 has biased composition (basic and acidic residues). Ser-137 bears the Phosphoserine mark. The next 2 helical transmembrane spans lie at Phe-160–Tyr-180 and Leu-187–Val-207.

Its subcellular location is the membrane. The polypeptide is Transmembrane protein 40 (TMEM40) (Homo sapiens (Human)).